A 185-amino-acid chain; its full sequence is Ribonuclease M5 1 (185 aa).

In terms of domain architecture, Toprim spans 4–87; that stretch reads KEVIVVEGKD…AFLTKHDAAP (84 aa). Positions 10, 56, and 58 each coordinate Mg(2+).

It belongs to the ribonuclease M5 family. Requires Mg(2+) as cofactor.

It is found in the cytoplasm. The enzyme catalyses Endonucleolytic cleavage of RNA, removing 21 and 42 nucleotides, respectively, from the 5'- and 3'-termini of a 5S-rRNA precursor.. In terms of biological role, required for correct processing of both the 5' and 3' ends of 5S rRNA precursor. Cleaves both sides of a double-stranded region yielding mature 5S rRNA in one step. The protein is Ribonuclease M5 1 of Ligilactobacillus salivarius (strain UCC118) (Lactobacillus salivarius).